A 424-amino-acid chain; its full sequence is GTPase Obg (424 aa).

An Obg domain is found at 1-158 (MFVDRAEVFV…RYISLELKIL (158 aa)). The tract at residues 21 to 42 (SFRREKYVPRGGPDGGDGGKGG) is disordered. Positions 32-42 (GPDGGDGGKGG) are enriched in gly residues. The 173-residue stretch at 159-331 (ADVGLLGFPN…LMKEAAAMLT (173 aa)) folds into the OBG-type G domain. Residues 165 to 172 (GFPNVGKS), 190 to 194 (FTTLS), 212 to 215 (DIPG), 282 to 285 (NKAD), and 312 to 314 (SAA) each bind GTP. Mg(2+)-binding residues include serine 172 and threonine 192. One can recognise an OCT domain in the interval 345 to 424 (KFIPEEKRFT…LNDFEFDYIL (80 aa)).

The protein belongs to the TRAFAC class OBG-HflX-like GTPase superfamily. OBG GTPase family. As to quaternary structure, monomer. Requires Mg(2+) as cofactor.

It is found in the cytoplasm. Its function is as follows. An essential GTPase which binds GTP, GDP and possibly (p)ppGpp with moderate affinity, with high nucleotide exchange rates and a fairly low GTP hydrolysis rate. Plays a role in control of the cell cycle, stress response, ribosome biogenesis and in those bacteria that undergo differentiation, in morphogenesis control. The chain is GTPase Obg from Clostridium kluyveri (strain NBRC 12016).